The following is a 388-amino-acid chain: Processive diacylglycerol beta-glucosyltransferase (388 aa).

The protein belongs to the glycosyltransferase 28 family. UgtP subfamily.

It localises to the cell membrane. The enzyme catalyses a 1,2-diacyl-3-O-(beta-D-glucopyranosyl)-sn-glycerol + UDP-alpha-D-glucose = a 1,2-diacyl-3-O-(beta-D-Glc-(1-&gt;6)-beta-D-Glc)-sn-glycerol + UDP + H(+). The catalysed reaction is a 1,2-diacyl-3-O-(beta-D-Glc-(1-&gt;6)-beta-D-Glc)-sn-glycerol + UDP-alpha-D-glucose = a 1,2-diacyl-3-O-(beta-D-Glc-(1-&gt;6)-beta-D-Glc-(1-&gt;6)-beta-D-Glc)-sn-glycerol + UDP + H(+). It catalyses the reaction a 1,2-diacyl-sn-glycerol + UDP-alpha-D-glucose = a 1,2-diacyl-3-O-(beta-D-glucopyranosyl)-sn-glycerol + UDP + H(+). The protein operates within glycolipid metabolism; diglucosyl-diacylglycerol biosynthesis. Functionally, processive glucosyltransferase involved in the biosynthesis of both the bilayer- and non-bilayer-forming membrane glucolipids. Is able to successively transfer up to three glucosyl residues to diacylglycerol (DAG), thereby catalyzing the formation of beta-monoglucosyl-DAG (3-O-(beta-D-glucopyranosyl)-1,2-diacyl-sn-glycerol), beta-diglucosyl-DAG (3-O-(beta-D-glucopyranosyl-beta-(1-&gt;6)-D-glucopyranosyl)-1,2-diacyl-sn-glycerol) and beta-triglucosyl-DAG (3-O-(beta-D-glucopyranosyl-beta-(1-&gt;6)-D-glucopyranosyl-beta-(1-&gt;6)-D-glucopyranosyl)-1,2-diacyl-sn-glycerol). Beta-diglucosyl-DAG is the predominant glycolipid found in Bacillales and is also used as a membrane anchor for lipoteichoic acid (LTA). In Bacillus cytotoxicus (strain DSM 22905 / CIP 110041 / 391-98 / NVH 391-98), this protein is Processive diacylglycerol beta-glucosyltransferase.